Consider the following 93-residue polypeptide: Small ribosomal subunit protein uS19 (93 aa).

It belongs to the universal ribosomal protein uS19 family.

Protein S19 forms a complex with S13 that binds strongly to the 16S ribosomal RNA. The sequence is that of Small ribosomal subunit protein uS19 from Parafrankia sp. (strain EAN1pec).